We begin with the raw amino-acid sequence, 229 residues long: Large ribosomal subunit protein uL1 (229 aa).

The protein belongs to the universal ribosomal protein uL1 family. In terms of assembly, part of the 50S ribosomal subunit.

In terms of biological role, binds directly to 23S rRNA. The L1 stalk is quite mobile in the ribosome, and is involved in E site tRNA release. Functionally, protein L1 is also a translational repressor protein, it controls the translation of the L11 operon by binding to its mRNA. In Chlorobium luteolum (strain DSM 273 / BCRC 81028 / 2530) (Pelodictyon luteolum), this protein is Large ribosomal subunit protein uL1.